The chain runs to 406 residues: Peptidase T (406 aa).

Residue H81 coordinates Zn(2+). D83 is an active-site residue. D142 provides a ligand contact to Zn(2+). Catalysis depends on E176, which acts as the Proton acceptor. Residues E177, D199, and H381 each contribute to the Zn(2+) site.

Belongs to the peptidase M20B family. Zn(2+) serves as cofactor.

It localises to the cytoplasm. The catalysed reaction is Release of the N-terminal residue from a tripeptide.. Its function is as follows. Cleaves the N-terminal amino acid of tripeptides. The protein is Peptidase T of Streptococcus suis (strain 98HAH33).